Consider the following 380-residue polypeptide: Cobalt-precorrin-5B C(1)-methyltransferase (380 aa).

The protein belongs to the CbiD family.

It carries out the reaction Co-precorrin-5B + S-adenosyl-L-methionine = Co-precorrin-6A + S-adenosyl-L-homocysteine. It functions in the pathway cofactor biosynthesis; adenosylcobalamin biosynthesis; cob(II)yrinate a,c-diamide from sirohydrochlorin (anaerobic route): step 6/10. Functionally, catalyzes the methylation of C-1 in cobalt-precorrin-5B to form cobalt-precorrin-6A. The polypeptide is Cobalt-precorrin-5B C(1)-methyltransferase (Salinispora tropica (strain ATCC BAA-916 / DSM 44818 / JCM 13857 / NBRC 105044 / CNB-440)).